The following is a 291-amino-acid chain: Protease HtpX homolog (291 aa).

2 helical membrane passes run 4–24 (ILLFVLTNVAVVAVLGIVASL) and 39–59 (GSLLGFALVIGFGGAIISLLI). Zn(2+) is bound at residue His144. The active site involves Glu145. His148 serves as a coordination point for Zn(2+). Helical transmembrane passes span 159-179 (LIQGVMNTFVVFLSRVIAFAI) and 199-219 (ITTVVLDIVLGFAAAIVVAWF). Residue Glu224 coordinates Zn(2+).

It belongs to the peptidase M48B family. Zn(2+) is required as a cofactor.

The protein localises to the cell inner membrane. This is Protease HtpX homolog from Albidiferax ferrireducens (strain ATCC BAA-621 / DSM 15236 / T118) (Rhodoferax ferrireducens).